The following is a 448-amino-acid chain: UDP-N-acetylmuramoylalanine--D-glutamate ligase (448 aa).

Position 116–122 (116–122 (GSNAKST)) interacts with ATP.

This sequence belongs to the MurCDEF family.

It is found in the cytoplasm. The catalysed reaction is UDP-N-acetyl-alpha-D-muramoyl-L-alanine + D-glutamate + ATP = UDP-N-acetyl-alpha-D-muramoyl-L-alanyl-D-glutamate + ADP + phosphate + H(+). It participates in cell wall biogenesis; peptidoglycan biosynthesis. Functionally, cell wall formation. Catalyzes the addition of glutamate to the nucleotide precursor UDP-N-acetylmuramoyl-L-alanine (UMA). The polypeptide is UDP-N-acetylmuramoylalanine--D-glutamate ligase (Pseudomonas savastanoi pv. phaseolicola (strain 1448A / Race 6) (Pseudomonas syringae pv. phaseolicola (strain 1448A / Race 6))).